The following is a 184-amino-acid chain: Large ribosomal subunit protein uL5 (184 aa).

It belongs to the universal ribosomal protein uL5 family. In terms of assembly, part of the 50S ribosomal subunit; part of the 5S rRNA/L5/L18/L25 subcomplex. Contacts the 5S rRNA and the P site tRNA. Forms a bridge to the 30S subunit in the 70S ribosome.

This is one of the proteins that bind and probably mediate the attachment of the 5S RNA into the large ribosomal subunit, where it forms part of the central protuberance. In the 70S ribosome it contacts protein S13 of the 30S subunit (bridge B1b), connecting the 2 subunits; this bridge is implicated in subunit movement. Contacts the P site tRNA; the 5S rRNA and some of its associated proteins might help stabilize positioning of ribosome-bound tRNAs. The sequence is that of Large ribosomal subunit protein uL5 from Fervidobacterium nodosum (strain ATCC 35602 / DSM 5306 / Rt17-B1).